The chain runs to 239 residues: Small ribosomal subunit protein uS2 (239 aa).

It belongs to the universal ribosomal protein uS2 family.

This chain is Small ribosomal subunit protein uS2, found in Francisella tularensis subsp. tularensis (strain WY96-3418).